Here is a 406-residue protein sequence, read N- to C-terminus: CinA-like protein (406 aa).

It belongs to the CinA family.

This chain is CinA-like protein, found in Deinococcus geothermalis (strain DSM 11300 / CIP 105573 / AG-3a).